The sequence spans 345 residues: Tetraacyldisaccharide 4'-kinase (345 aa).

An ATP-binding site is contributed by 54 to 61 (TLGGAGKT).

Belongs to the LpxK family.

The catalysed reaction is a lipid A disaccharide + ATP = a lipid IVA + ADP + H(+). Its pathway is glycolipid biosynthesis; lipid IV(A) biosynthesis; lipid IV(A) from (3R)-3-hydroxytetradecanoyl-[acyl-carrier-protein] and UDP-N-acetyl-alpha-D-glucosamine: step 6/6. In terms of biological role, transfers the gamma-phosphate of ATP to the 4'-position of a tetraacyldisaccharide 1-phosphate intermediate (termed DS-1-P) to form tetraacyldisaccharide 1,4'-bis-phosphate (lipid IVA). In Allorhizobium ampelinum (strain ATCC BAA-846 / DSM 112012 / S4) (Agrobacterium vitis (strain S4)), this protein is Tetraacyldisaccharide 4'-kinase.